The sequence spans 479 residues: Dihydrolipoyl dehydrogenase (479 aa).

Residues 41-50, lysine 59, alanine 124, and 153-155 contribute to the FAD site; these read EKRGALGGTC and TGS. A disulfide bridge connects residues cysteine 50 and cysteine 55. NAD(+) contacts are provided by residues 190 to 197, glutamate 213, isoleucine 247, and glycine 284; that span reads GGGVIGLE. FAD is bound by residues aspartate 325 and 332–335; that span reads MLAH. Histidine 458 (proton acceptor) is an active-site residue.

The protein belongs to the class-I pyridine nucleotide-disulfide oxidoreductase family. As to quaternary structure, homodimer. FAD serves as cofactor.

It catalyses the reaction N(6)-[(R)-dihydrolipoyl]-L-lysyl-[protein] + NAD(+) = N(6)-[(R)-lipoyl]-L-lysyl-[protein] + NADH + H(+). The sequence is that of Dihydrolipoyl dehydrogenase from Trypanosoma brucei brucei.